The primary structure comprises 318 residues: Biotin synthase (318 aa).

The 230-residue stretch at 44 to 273 (LCGNKFDLCT…TVQIRLAGGR (230 aa)) folds into the Radical SAM core domain. The [4Fe-4S] cluster site is built by cysteine 62, cysteine 66, and cysteine 69. 4 residues coordinate [2Fe-2S] cluster: serine 106, cysteine 138, cysteine 198, and arginine 268.

The protein belongs to the radical SAM superfamily. Biotin synthase family. Homodimer. [4Fe-4S] cluster is required as a cofactor. [2Fe-2S] cluster serves as cofactor.

It carries out the reaction (4R,5S)-dethiobiotin + (sulfur carrier)-SH + 2 reduced [2Fe-2S]-[ferredoxin] + 2 S-adenosyl-L-methionine = (sulfur carrier)-H + biotin + 2 5'-deoxyadenosine + 2 L-methionine + 2 oxidized [2Fe-2S]-[ferredoxin]. It functions in the pathway cofactor biosynthesis; biotin biosynthesis; biotin from 7,8-diaminononanoate: step 2/2. Its function is as follows. Catalyzes the conversion of dethiobiotin (DTB) to biotin by the insertion of a sulfur atom into dethiobiotin via a radical-based mechanism. This is Biotin synthase from Clostridium botulinum (strain Langeland / NCTC 10281 / Type F).